The primary structure comprises 95 residues: Aspartyl/glutamyl-tRNA(Asn/Gln) amidotransferase subunit C (95 aa).

It belongs to the GatC family. In terms of assembly, heterotrimer of A, B and C subunits.

It carries out the reaction L-glutamyl-tRNA(Gln) + L-glutamine + ATP + H2O = L-glutaminyl-tRNA(Gln) + L-glutamate + ADP + phosphate + H(+). The enzyme catalyses L-aspartyl-tRNA(Asn) + L-glutamine + ATP + H2O = L-asparaginyl-tRNA(Asn) + L-glutamate + ADP + phosphate + 2 H(+). In terms of biological role, allows the formation of correctly charged Asn-tRNA(Asn) or Gln-tRNA(Gln) through the transamidation of misacylated Asp-tRNA(Asn) or Glu-tRNA(Gln) in organisms which lack either or both of asparaginyl-tRNA or glutaminyl-tRNA synthetases. The reaction takes place in the presence of glutamine and ATP through an activated phospho-Asp-tRNA(Asn) or phospho-Glu-tRNA(Gln). This is Aspartyl/glutamyl-tRNA(Asn/Gln) amidotransferase subunit C from Rhizobium etli (strain ATCC 51251 / DSM 11541 / JCM 21823 / NBRC 15573 / CFN 42).